The sequence spans 411 residues: Imidazolonepropionase (411 aa).

The Fe(3+) site is built by histidine 75 and histidine 77. Positions 75 and 77 each coordinate Zn(2+). 4-imidazolone-5-propanoate-binding residues include arginine 84, tyrosine 147, and histidine 180. Tyrosine 147 contacts N-formimidoyl-L-glutamate. Histidine 245 contributes to the Fe(3+) binding site. Residue histidine 245 participates in Zn(2+) binding. A 4-imidazolone-5-propanoate-binding site is contributed by glutamine 248. Position 320 (aspartate 320) interacts with Fe(3+). Position 320 (aspartate 320) interacts with Zn(2+). N-formimidoyl-L-glutamate-binding residues include asparagine 322 and glycine 324. Threonine 325 lines the 4-imidazolone-5-propanoate pocket.

This sequence belongs to the metallo-dependent hydrolases superfamily. HutI family. Zn(2+) is required as a cofactor. It depends on Fe(3+) as a cofactor.

It localises to the cytoplasm. The enzyme catalyses 4-imidazolone-5-propanoate + H2O = N-formimidoyl-L-glutamate. Its pathway is amino-acid degradation; L-histidine degradation into L-glutamate; N-formimidoyl-L-glutamate from L-histidine: step 3/3. Its function is as follows. Catalyzes the hydrolytic cleavage of the carbon-nitrogen bond in imidazolone-5-propanoate to yield N-formimidoyl-L-glutamate. It is the third step in the universal histidine degradation pathway. The protein is Imidazolonepropionase of Photobacterium profundum (strain SS9).